We begin with the raw amino-acid sequence, 231 residues long: Ubiquinone biosynthesis protein coq-4, mitochondrial (231 aa).

Residues His133, Asp134, His137, and Glu149 each contribute to the Zn(2+) site.

Belongs to the COQ4 family. Component of a multi-subunit COQ enzyme complex. Zn(2+) is required as a cofactor.

The protein resides in the mitochondrion inner membrane. The catalysed reaction is a 4-hydroxy-3-methoxy-5-(all-trans-polyprenyl)benzoate + H(+) = a 2-methoxy-6-(all-trans-polyprenyl)phenol + CO2. The protein operates within cofactor biosynthesis; ubiquinone biosynthesis. Its function is as follows. Lyase that catalyzes the C1-decarboxylation of 4-hydroxy-3-methoxy-5-(all-trans-polyprenyl)benzoic acid into 2-methoxy-6-(all-trans-polyprenyl)phenol during ubiquinone biosynthesis. The chain is Ubiquinone biosynthesis protein coq-4, mitochondrial from Caenorhabditis elegans.